We begin with the raw amino-acid sequence, 505 residues long: Histidine ammonia-lyase (505 aa).

Positions 141–143 form a cross-link, 5-imidazolinone (Ala-Gly); sequence ASG. Position 142 is a 2,3-didehydroalanine (Ser) (serine 142).

The protein belongs to the PAL/histidase family. In terms of processing, contains an active site 4-methylidene-imidazol-5-one (MIO), which is formed autocatalytically by cyclization and dehydration of residues Ala-Ser-Gly.

It localises to the cytoplasm. It carries out the reaction L-histidine = trans-urocanate + NH4(+). It functions in the pathway amino-acid degradation; L-histidine degradation into L-glutamate; N-formimidoyl-L-glutamate from L-histidine: step 1/3. In Bacillus cereus (strain G9842), this protein is Histidine ammonia-lyase.